Consider the following 314-residue polypeptide: MIOREX complex component 8 (314 aa).

An EngB-type G domain is found at 132–312 (TLPEVIFLGG…RYVIFQSCGL (181 aa)). GTP contacts are provided by residues 140–147 (GGTNVGKS), 173–177 (GFTKT), 191–194 (DSPG), 253–256 (TKMD), and 290–292 (SST). Positions 147 and 175 each coordinate Mg(2+).

The protein belongs to the TRAFAC class TrmE-Era-EngA-EngB-Septin-like GTPase superfamily. EngB GTPase family. Associates with the mitochondrial ribosome. Requires Mg(2+) as cofactor. Post-translationally, sumoylated upon ethanol stress.

It localises to the mitochondrion. Functionally, component of MIOREX complexes, large expressome-like assemblies of ribosomes with factors involved in all the steps of post-transcriptional gene expression. The polypeptide is MIOREX complex component 8 (Saccharomyces cerevisiae (strain ATCC 204508 / S288c) (Baker's yeast)).